The primary structure comprises 483 residues: MHQLTLAEIARGLADKSFSSEELTGALLARIQQLDPQLNSFISVTEELALGQARAADARRAAGETGALLGAPIAHKDLFCTNGVRTSCGSKMLDNFKAPYDATVVAKLAEAGMVTLGKTNMDEFAMGSANESSHYGAVKNPWNLEHVPGGSSGGSAAAVAARLLPATTGTDTGGSIRQPAALTNLTGLKPTYGRVSRWGMIAYASSLDQGGPLARTAEDCALLLQGMAGFDAKDSTSIDEPVPDYSANLNASLQGLRIGLPKEYFGAGLDPRIAELVQASVKELEKLGAVVKEISLPNMQHAIPAYYVIAPAEASSNLSRFDGVRFGYRCDEPKDLTDLYKRSRGEGFGAEVQRRIMVGTYALSAGYYDAYYVKAQQIRRLIKNDFMAAFEGVDLILGPTTPNPAWKLGAKSSDPVAAYLEDVYTITANLAGLPGLSMPAGFVDGLPVGVQLLAPYFQEGRLLNVAHRYQQVTDWHTRAPNGF.

Catalysis depends on charge relay system residues Lys76 and Ser151. The active-site Acyl-ester intermediate is the Ser175.

Belongs to the amidase family. GatA subfamily. Heterotrimer of A, B and C subunits.

It carries out the reaction L-glutamyl-tRNA(Gln) + L-glutamine + ATP + H2O = L-glutaminyl-tRNA(Gln) + L-glutamate + ADP + phosphate + H(+). In terms of biological role, allows the formation of correctly charged Gln-tRNA(Gln) through the transamidation of misacylated Glu-tRNA(Gln) in organisms which lack glutaminyl-tRNA synthetase. The reaction takes place in the presence of glutamine and ATP through an activated gamma-phospho-Glu-tRNA(Gln). The sequence is that of Glutamyl-tRNA(Gln) amidotransferase subunit A from Pseudomonas putida (strain W619).